The primary structure comprises 116 residues: Ribosome-binding factor A (116 aa).

The protein belongs to the RbfA family. Monomer. Binds 30S ribosomal subunits, but not 50S ribosomal subunits or 70S ribosomes.

The protein localises to the cytoplasm. One of several proteins that assist in the late maturation steps of the functional core of the 30S ribosomal subunit. Associates with free 30S ribosomal subunits (but not with 30S subunits that are part of 70S ribosomes or polysomes). Required for efficient processing of 16S rRNA. May interact with the 5'-terminal helix region of 16S rRNA. In Clostridium botulinum (strain Alaska E43 / Type E3), this protein is Ribosome-binding factor A.